The primary structure comprises 276 residues: Lectin-like protein At3g16530 (276 aa).

Residues 1 to 19 form the signal peptide; sequence MQIHKLCFLVLFLANAAFA. Residues 20 to 270 are legume-lectin like; it reads VKFNFDSFDG…RHDIWSWSFE (251 aa). N-linked (GlcNAc...) asparagine glycosylation is found at N79, N129, and N196.

This sequence belongs to the leguminous lectin family.

The protein resides in the secreted. Its subcellular location is the extracellular space. It localises to the apoplast. The polypeptide is Lectin-like protein At3g16530 (Arabidopsis thaliana (Mouse-ear cress)).